Here is a 948-residue protein sequence, read N- to C-terminus: Insulin receptor substrate 1 (948 aa).

One can recognise a PH domain in the interval 8–109; it reads GMALSGYLKK…WLDKLLVLQR (102 aa). One can recognise an IRS-type PTB domain in the interval 122 to 236; the sequence is YDQVWQVVIQ…SAMSAKTESN (115 aa). The disordered stretch occupies residues 247–270; that stretch reads PDLSHEPMRKRSSSANEASKPINV. Residues Ser286 and Ser287 each carry the phosphoserine modification. The span at 304-329 shows a compositional bias: polar residues; it reads RNGTLSESSNQTYFGSNHGLRSNTIS. A disordered region spans residues 304-373; the sequence is RNGTLSESSN…SDDNGSFSHY (70 aa). At Ser342 the chain carries Phosphoserine. Position 410 is a phosphotyrosine; by INSR (Tyr410). The short motif at 410–413 is the YXXM motif 1 element; that stretch reads YIPM. The tract at residues 528-559 is disordered; the sequence is ANRSQSSITKEGTSYSTSSNRQKKSTSAPLLS. A compositionally biased stretch (polar residues) spans 529 to 556; sequence NRSQSSITKEGTSYSTSSNRQKKSTSAP. Ser554 is modified (phosphoserine). Positions 640–643 match the YXXM motif 2 motif; that stretch reads YLEM. The interval 703-734 is disordered; sequence EKKSNSPLNETPCSLKPTDVESNSHDEHSTNN. Residues 720–731 show a composition bias toward basic and acidic residues; the sequence is TDVESNSHDEHS. Residue Tyr891 is modified to Phosphotyrosine; by INSR. Residues 907–948 form a disordered region; it reads YLKRGSRESPPVSACPGDGNTYAKIDFDQSDSSSSSSNIFNT. A phosphoserine mark is found at Ser912 and Ser915. Tyr928 bears the Phosphotyrosine; by INSR mark. Positions 936 to 948 are enriched in low complexity; it reads SDSSSSSSNIFNT.

In terms of assembly, bindings to phosphatidylinositol 3-kinase and SHP2.

In terms of biological role, activates phosphatidylinositol 3-kinase when bound to the regulatory p85 subunit. May mediate the control of various cellular processes by insulin-like peptides. When phosphorylated by the insulin receptor binds specifically to various cellular proteins containing SH2 domains. Involved in control of cell proliferation, cell size, and body and organ growth throughout development. Also has a role in a signaling pathway controlling the physiological response required to endure periods of low nutrient conditions. Insulin/insulin-like growth factor (IGF) signaling pathway has a role in regulating aging and is necessary in the ovary for vitellogenic maturation. The protein is Insulin receptor substrate 1 of Drosophila erecta (Fruit fly).